An 89-amino-acid chain; its full sequence is MNIKPLADRVLVKPAAAEEKTVSGIIIPDSAKEKPLKGEVIAVGNGTKDEEMVLKAGDTVLYGKYAGTEIELEGEKYIIMRQNDVLAII.

It belongs to the GroES chaperonin family. As to quaternary structure, heptamer of 7 subunits arranged in a ring. Interacts with the chaperonin GroEL.

The protein localises to the cytoplasm. Its function is as follows. Together with the chaperonin GroEL, plays an essential role in assisting protein folding. The GroEL-GroES system forms a nano-cage that allows encapsulation of the non-native substrate proteins and provides a physical environment optimized to promote and accelerate protein folding. GroES binds to the apical surface of the GroEL ring, thereby capping the opening of the GroEL channel. This Porphyromonas gingivalis (strain ATCC 33277 / DSM 20709 / CIP 103683 / JCM 12257 / NCTC 11834 / 2561) protein is Co-chaperonin GroES.